We begin with the raw amino-acid sequence, 387 residues long: MSVIKMIDLDLAGKRVFIRADLNVPVKDGKVTSDARILASLPTIKHCLEAGAKVMVTSHLGRPTEGEYAEEFSLLPVVNYLNDALDCEVRLVKDYLDGVELNAGELVVLENVRFNKGEKKNEEALSKKYAALCDVFVMDAFGTAHRAQASTHGVGMFAPIACAGPLLADELEALGKAMDKPARPMVAIVGGSKVSTKLTVLESLSKIADQLVVGGGIANTFIAAAGHNVGKSLYEADLVETAKKLMEECAIPVATDVACAKAFDENAEAEIKHVSEVQDDDMIFDLGPNSTAELAEILKNAKTILWNGPVGVFEFKNFEAGTRGIAEAIAQSEGFSVAGGGDTLAAIDKFGIKADVSYISTGGGAFLEFVEGKKLPAVEMLEARAKA.

Substrate is bound by residues 21–23 (DLN), Arg-36, 59–62 (HLGR), Arg-113, and Arg-146. ATP contacts are provided by residues Lys-197, Glu-314, and 340–343 (GGDT).

It belongs to the phosphoglycerate kinase family. In terms of assembly, monomer.

It localises to the cytoplasm. It catalyses the reaction (2R)-3-phosphoglycerate + ATP = (2R)-3-phospho-glyceroyl phosphate + ADP. It functions in the pathway carbohydrate degradation; glycolysis; pyruvate from D-glyceraldehyde 3-phosphate: step 2/5. The protein is Phosphoglycerate kinase (pgk) of Vibrio cholerae serotype O1 (strain ATCC 39541 / Classical Ogawa 395 / O395).